The sequence spans 175 residues: Transcription factor HES-3 (175 aa).

The bHLH domain occupies Met-1 to Leu-49. Residues Tyr-65–Arg-98 enclose the Orange domain. Low complexity predominate over residues Pro-124 to Leu-145. Residues Pro-124 to Trp-175 are disordered. Positions Trp-172–Trp-175 match the WRPW motif motif.

Transcription repression requires formation of a complex with a corepressor protein of the Groucho/TLE family. Expressed exclusively in Purkinje cells.

Its subcellular location is the nucleus. In terms of biological role, transcriptional repressor of genes that require a bHLH protein for their transcription. The sequence is that of Transcription factor HES-3 (Hes3) from Rattus norvegicus (Rat).